Consider the following 557-residue polypeptide: Glutamine--tRNA ligase (557 aa).

The 'HIGH' region motif lies at 42–52; the sequence is PEPNGYLHIGH. ATP-binding positions include 43–45 and 49–55; these read EPN and HIGHAKS. Residues aspartate 75 and tyrosine 220 each contribute to the L-glutamine site. ATP contacts are provided by residues threonine 239 and 270-271; that span reads RL. The 'KMSKS' region motif lies at 277–281; the sequence is LTSKR.

It belongs to the class-I aminoacyl-tRNA synthetase family. Monomer.

Its subcellular location is the cytoplasm. It catalyses the reaction tRNA(Gln) + L-glutamine + ATP = L-glutaminyl-tRNA(Gln) + AMP + diphosphate. The chain is Glutamine--tRNA ligase from Haemophilus influenzae (strain ATCC 51907 / DSM 11121 / KW20 / Rd).